The sequence spans 267 residues: Small ribosomal subunit protein uS2 (267 aa).

The segment at 237-267 (IGESAAAPSEPALETASAEATAEGEQPGSQA) is disordered. Over residues 238 to 261 (GESAAAPSEPALETASAEATAEGE) the composition is skewed to low complexity.

This sequence belongs to the universal ribosomal protein uS2 family.

This is Small ribosomal subunit protein uS2 from Chelativorans sp. (strain BNC1).